A 648-amino-acid polypeptide reads, in one-letter code: Cysteine-rich receptor-like protein kinase 38 (648 aa).

The signal sequence occupies residues 1–25 (MKNSAAIFLTSSLILLLQTLHGVKA). Gnk2-homologous domains lie at 26–127 (GFIC…DQST) and 140–247 (PSPV…FYPF). At 26–278 (GFICVGSSFP…EAISITRLKG (253 aa)) the chain is on the extracellular side. 5 N-linked (GlcNAc...) asparagine glycosylation sites follow: N37, N63, N151, N174, and N253. A helical membrane pass occupies residues 279-299 (GIIAIFVVPIVINLLVFIGLI). Residues 300-648 (RAYTRIRKSY…ELSITELSPR (349 aa)) lie on the Cytoplasmic side of the membrane. Residues 339 to 611 (FSFENKIGQG…VIQWLGSETI (273 aa)) enclose the Protein kinase domain. Residues 345-353 (IGQGGFGSV) and K367 each bind ATP. Residue Y412 is modified to Phosphotyrosine. D464 serves as the catalytic Proton acceptor. S468 is modified (phosphoserine). T504 carries the post-translational modification Phosphothreonine. Y512 carries the post-translational modification Phosphotyrosine.

Belongs to the protein kinase superfamily. Ser/Thr protein kinase family. CRK subfamily.

It is found in the membrane. It catalyses the reaction L-seryl-[protein] + ATP = O-phospho-L-seryl-[protein] + ADP + H(+). It carries out the reaction L-threonyl-[protein] + ATP = O-phospho-L-threonyl-[protein] + ADP + H(+). The chain is Cysteine-rich receptor-like protein kinase 38 (CRK38) from Arabidopsis thaliana (Mouse-ear cress).